Reading from the N-terminus, the 87-residue chain is Small ribosomal subunit protein bS20 (87 aa).

Residues 1–24 (MANTAQARKRARQSVERNKHNSSL) are disordered.

It belongs to the bacterial ribosomal protein bS20 family.

Binds directly to 16S ribosomal RNA. The chain is Small ribosomal subunit protein bS20 from Bordetella petrii (strain ATCC BAA-461 / DSM 12804 / CCUG 43448).